Here is a 151-residue protein sequence, read N- to C-terminus: MKLLKVAAIAAIVFSGSALAGVVPQYGGGGNHGGGGNNSGPNSELNIYQYGGGNSALALQTDARNSDLTITQHGGGNGADVGQGSDDSSIDLTQRGFGNSATLDQWNGKNSEMTVKQFGGGNGAAVDQTASNSSVNVTQVGFGNNATAHQY.

A signal peptide spans 1–20; sequence MKLLKVAAIAAIVFSGSALA. The interval 71–90 is disordered; that stretch reads TQHGGGNGADVGQGSDDSSI.

This sequence belongs to the CsgA/CsgB family.

Its subcellular location is the fimbrium. Its function is as follows. Curlin is the structural subunit of the curli fimbriae. Curli are coiled surface structures that assemble preferentially at growth temperatures below 37 degrees Celsius. Curli can bind to fibronectin. This is Major curlin subunit (csgA) from Escherichia coli (strain K12).